A 610-amino-acid chain; its full sequence is UvrABC system protein C (610 aa).

In terms of domain architecture, GIY-YIG spans 16–94 (SQPGVYRMYD…IKLYQPRYNV (79 aa)). The region spanning 204 to 239 (DQVLTQLIARMEKASQNLEFEEAARIRDQIQAVRRV) is the UVR domain.

Belongs to the UvrC family. As to quaternary structure, interacts with UvrB in an incision complex.

The protein localises to the cytoplasm. The UvrABC repair system catalyzes the recognition and processing of DNA lesions. UvrC both incises the 5' and 3' sides of the lesion. The N-terminal half is responsible for the 3' incision and the C-terminal half is responsible for the 5' incision. The polypeptide is UvrABC system protein C (Escherichia fergusonii (strain ATCC 35469 / DSM 13698 / CCUG 18766 / IAM 14443 / JCM 21226 / LMG 7866 / NBRC 102419 / NCTC 12128 / CDC 0568-73)).